Reading from the N-terminus, the 410-residue chain is Lysosome-associated membrane glycoprotein 2 (410 aa).

The first 28 residues, 1–28 (MMCFRLSPVSGSGLVLSCLLLGAVQSYA), serve as a signal peptide directing secretion. A first lumenal domain region spans residues 29–192 (FELNLPDSKA…SKEEFVCEED (164 aa)). The Lumenal segment spans residues 29-375 (FELNLPDSKA…QDCSADEDNF (347 aa)). Cysteine 40 and cysteine 79 are joined by a disulfide. N-linked (GlcNAc...) asparagine glycans are attached at residues asparagine 48, asparagine 58, asparagine 71, asparagine 75, asparagine 99, asparagine 119, asparagine 123, asparagine 179, asparagine 222, asparagine 229, asparagine 242, asparagine 260, asparagine 275, asparagine 300, asparagine 307, asparagine 317, and asparagine 356. An intrachain disulfide couples cysteine 153 to cysteine 189. The interval 193 to 228 (KSVTTVRPIIHTTVPPPTTTPTPLPPKVGNYSVSNG) is hinge. Residues 229–375 (NATCLLATMG…QDCSADEDNF (147 aa)) are second lumenal domain. A disulfide bridge links cysteine 232 with cysteine 265. Cysteine 331 and cysteine 368 are disulfide-bonded. The chain crosses the membrane as a helical span at residues 376–399 (LVPIAVGAALAGVLALVLLAYFIG). The Cytoplasmic segment spans residues 400–410 (LKRHHTGYEQF). An important for binding and subsequent lysosomal degradation of target proteins region spans residues 401-404 (KRHH).

The protein belongs to the LAMP family. Monomer. Forms large homooligomers. Interacts (via its cytoplasmic region) with HSPA8; HSPA8 mediates recruitment of proteins with a KFERQ motif to the surface of the lysosome for chaperone-mediated autophagy. Interacts with HSP90 in the lysosome lumen; this enhances LAMP2 stability. Interacts with MLLT11. Interacts with ABCB9. Interacts with FURIN. Interacts with CT55; this interaction may be important for LAMP2 protein stability. Interacts with TMEM175; inhibiting the proton channel activity of TMEM175. Forms a ternary complex with RAB7A and RUFY4 (via RUN domain); the interaction with RAB7A is mediated by RUFY4 (via RUN and coiled coil domains). Extensively N-glycosylated. Contains a minor proportion of O-linked glycans.

It is found in the lysosome membrane. The protein localises to the endosome membrane. Its subcellular location is the cell membrane. It localises to the cytoplasmic vesicle. The protein resides in the autophagosome membrane. Its function is as follows. Lysosomal membrane glycoprotein which plays an important role in lysosome biogenesis, lysosomal pH regulation and autophagy. Acts as an important regulator of lysosomal lumen pH regulation by acting as a direct inhibitor of the proton channel TMEM175, facilitating lysosomal acidification for optimal hydrolase activity. Plays an important role in chaperone-mediated autophagy, a process that mediates lysosomal degradation of proteins in response to various stresses and as part of the normal turnover of proteins with a long biological half-live. Functions by binding target proteins, such as GAPDH, NLRP3 and MLLT11, and targeting them for lysosomal degradation. In the chaperone-mediated autophagy, acts downstream of chaperones, such as HSPA8/HSC70, which recognize and bind substrate proteins and mediate their recruitment to lysosomes, where target proteins bind LAMP2. Plays a role in lysosomal protein degradation in response to starvation. Required for the fusion of autophagosomes with lysosomes during autophagy. Cells that lack LAMP2 express normal levels of VAMP8, but fail to accumulate STX17 on autophagosomes, which is the most likely explanation for the lack of fusion between autophagosomes and lysosomes. Required for normal degradation of the contents of autophagosomes. Required for efficient MHC class II-mediated presentation of exogenous antigens via its function in lysosomal protein degradation; antigenic peptides generated by proteases in the endosomal/lysosomal compartment are captured by nascent MHC II subunits. Is not required for efficient MHC class II-mediated presentation of endogenous antigens. This Cricetulus griseus (Chinese hamster) protein is Lysosome-associated membrane glycoprotein 2 (LAMP2).